A 156-amino-acid polypeptide reads, in one-letter code: Protein-export protein SecB (156 aa).

It belongs to the SecB family. Homotetramer, a dimer of dimers. One homotetramer interacts with 1 SecA dimer.

The protein localises to the cytoplasm. One of the proteins required for the normal export of preproteins out of the cell cytoplasm. It is a molecular chaperone that binds to a subset of precursor proteins, maintaining them in a translocation-competent state. It also specifically binds to its receptor SecA. The polypeptide is Protein-export protein SecB (Xanthobacter autotrophicus (strain ATCC BAA-1158 / Py2)).